Reading from the N-terminus, the 539-residue chain is Laccase-1 (539 aa).

The N-terminal stretch at 1 to 21 (MAFTAISLFLAALGVINTAFA) is a signal peptide. Plastocyanin-like domains are found at residues 37–154 (AEVN…YDPE) and 166–309 (ESTV…HYLG). Asparagine 78 carries N-linked (GlcNAc...) asparagine glycosylation. 2 residues coordinate Cu cation: histidine 88 and histidine 90. Cystine bridges form between cysteine 109-cysteine 513 and cysteine 141-cysteine 228. Asparagine 120 carries N-linked (GlcNAc...) asparagine glycosylation. Cu cation is bound by residues histidine 133 and histidine 135. 8 N-linked (GlcNAc...) asparagine glycosylation sites follow: asparagine 202, asparagine 233, asparagine 240, asparagine 293, asparagine 318, asparagine 353, asparagine 385, and asparagine 405. A Plastocyanin-like 3 domain is found at 374–495 (SPTVPVLLQI…GFAVVMAEDP (122 aa)). Cu cation contacts are provided by histidine 421, histidine 424, and histidine 426. The N-linked (GlcNAc...) asparagine glycan is linked to asparagine 457. The Cu cation site is built by histidine 476, cysteine 477, histidine 478, and histidine 482. The N-linked (GlcNAc...) asparagine glycan is linked to asparagine 532.

It belongs to the multicopper oxidase family. It depends on Cu cation as a cofactor.

The protein localises to the secreted. The enzyme catalyses 4 hydroquinone + O2 = 4 benzosemiquinone + 2 H2O. Its activity is regulated as follows. Inhibited by chloride ions. Inhibited by citrate. Inhibited by oxalate. Activated by acetate. Functionally, in vitro, has activity towards 2,2'-azino-bis(3-ethylbenzthiazoline-6-sulfonic acid) (ABTS), 2,6-dimethoxy-phenol, and guaiacol. Although brown rot fungi preferentially degrade hemicellulose and cellulose, the enzyme may contribute to generating small amounts of lignin breakdown products required for catalytic reactions. The polypeptide is Laccase-1 (Fomitopsis schrenkii (Brown rot fungus)).